The sequence spans 380 residues: Transaldolase (380 aa).

Catalysis depends on Lys141, which acts as the Schiff-base intermediate with substrate.

The protein belongs to the transaldolase family. Type 2 subfamily.

It localises to the cytoplasm. It catalyses the reaction D-sedoheptulose 7-phosphate + D-glyceraldehyde 3-phosphate = D-erythrose 4-phosphate + beta-D-fructose 6-phosphate. The protein operates within carbohydrate degradation; pentose phosphate pathway; D-glyceraldehyde 3-phosphate and beta-D-fructose 6-phosphate from D-ribose 5-phosphate and D-xylulose 5-phosphate (non-oxidative stage): step 2/3. In terms of biological role, transaldolase is important for the balance of metabolites in the pentose-phosphate pathway. This chain is Transaldolase, found in Trichodesmium erythraeum (strain IMS101).